The sequence spans 248 residues: Triosephosphate isomerase (248 aa).

Positions 10 and 12 each coordinate D-glyceraldehyde 3-phosphate. H95 (electrophile) is an active-site residue. Residue E165 is the Proton acceptor of the active site. Residues G171, L230, and 232-233 (GN) contribute to the D-glyceraldehyde 3-phosphate site.

This sequence belongs to the triosephosphate isomerase family. Homodimer.

It carries out the reaction D-glyceraldehyde 3-phosphate = dihydroxyacetone phosphate. Its pathway is carbohydrate biosynthesis; gluconeogenesis. It functions in the pathway carbohydrate degradation; glycolysis; D-glyceraldehyde 3-phosphate from glycerone phosphate: step 1/1. Catalyzes the interconversion of glyceraldehyde 3-phosphate and dihydroxyacetone phosphate in the glycolytic and gluconeogenic pathways. In Plasmodium falciparum (isolate 3D7), this protein is Triosephosphate isomerase.